We begin with the raw amino-acid sequence, 402 residues long: Propionate kinase (402 aa).

Positions 11 and 18 each coordinate ATP. N11 is a binding site for Mg(2+). R86 is a substrate binding site. D143 functions as the Proton donor/acceptor in the catalytic mechanism. ATP is bound by residues H175, 203–207 (HLGNG), 278–280 (DLR), and 326–330 (GIGEN).

Belongs to the acetokinase family. TdcD subfamily. Homodimer. The cofactor is Mg(2+).

The enzyme catalyses propanoate + ATP = propanoyl phosphate + ADP. It functions in the pathway amino-acid degradation; L-threonine degradation via propanoate pathway; propanoate from L-threonine: step 4/4. Catalyzes the conversion of propionyl phosphate and ADP to propionate and ATP. In Citrobacter koseri (strain ATCC BAA-895 / CDC 4225-83 / SGSC4696), this protein is Propionate kinase.